A 398-amino-acid polypeptide reads, in one-letter code: Secreted aspartic protease 2 (398 aa).

The first 18 residues, 1–18 (MFLKNIFIALAIALLVDA), serve as a signal peptide directing secretion. Residues 19–56 (TPTTTKRSAGFVALDFSVVKTPKAFPVTNGQEGKTSKR) constitute a propeptide, activation peptide. The region spanning 70-384 (YAADITVGSN…DLDDNEISLA (315 aa)) is the Peptidase A1 domain. Residue Asp88 is part of the active site. 88–90 (DTG) provides a ligand contact to pepstatin A. Cys103 and Cys115 form a disulfide bridge. 141–142 (GD) is a binding site for pepstatin A. 2 residues coordinate Zn(2+): Asp247 and Asp270. Asp274 is an active-site residue. 274 to 278 (DSGTT) lines the pepstatin A pocket. The cysteines at positions 312 and 350 are disulfide-linked. Asn313 and Asn321 each carry an N-linked (GlcNAc...) asparagine glycan.

Belongs to the peptidase A1 family. In terms of assembly, monomer.

The protein resides in the secreted. The enzyme catalyses Preferential cleavage at the carboxyl of hydrophobic amino acids, but fails to cleave 15-Leu-|-Tyr-16, 16-Tyr-|-Leu-17 and 24-Phe-|-Phe-25 of insulin B chain. Activates trypsinogen, and degrades keratin.. Functionally, secreted aspartic peptidases (SAPs) are a group of ten acidic hydrolases considered as key virulence factors. These enzymes supply the fungus with nutrient amino acids as well as are able to degrade the selected host's proteins involved in the immune defense. Induces host inflammatory cytokine production in a proteolytic activity-independent way. Plays a role in tissue damage during superficial infection. Moreover, acts toward human hemoglobin though limited proteolysis to generate a variety of antimicrobial hemocidins, enabling to compete with the other microorganisms of the same physiological niche using the microbicidal peptides generated from the host protein. Plays a key role in defense against host by cleaving histatin-5 (Hst 5), a peptide from human saliva that carries out fungicidal activity. The cleavage rate decreases in an order of SAP2 &gt; SAP9 &gt; SAP3 &gt; SAP7 &gt; SAP4 &gt; SAP1 &gt; SAP8. The first cleavage occurs between residues 'Lys-17' and 'His-18' of Hst 5, giving DSHAKRHHGYKRKFHEK and HHSHRGY peptides. Simultaneously, the DSHAKRHHGYKRK peptide is also formed. Further fragmentation by SAP2 results in FHEK and DSHAKRHHGY products. This chain is Secreted aspartic protease 2, found in Candida albicans (strain SC5314 / ATCC MYA-2876) (Yeast).